The following is a 357-amino-acid chain: Mannonate dehydratase (357 aa).

Belongs to the mannonate dehydratase family. Fe(2+) is required as a cofactor. It depends on Mn(2+) as a cofactor.

It catalyses the reaction D-mannonate = 2-dehydro-3-deoxy-D-gluconate + H2O. The protein operates within carbohydrate metabolism; pentose and glucuronate interconversion. Catalyzes the dehydration of D-mannonate. The chain is Mannonate dehydratase from Enterococcus faecalis (strain ATCC 700802 / V583).